Consider the following 383-residue polypeptide: Glycoprotein gp2 (383 aa).

A signal peptide spans 1–25; the sequence is MGFIYARKLLLCMAVSIYAIGSTTT. A compositionally biased stretch (low complexity) spans 24–75; that stretch reads TTTETTTSSSSTSGSGQSTSSGTTNSSSSPTTSPPTTSSSPPTSTHTSSPST. Residues 24-136 are disordered; it reads TTTETTTSSS…RNNSIEIVPQ (113 aa). Residue N48 is glycosylated (N-linked (GlcNAc...) asparagine; by host). Over residues 81–91 the composition is skewed to basic residues; that stretch reads HAGHHRGRAGG. N-linked (GlcNAc...) asparagine; by host glycosylation is present at N128. The helical transmembrane segment at 354-371 threads the bilayer; sequence LVAATTLTVTILCLLCCL.

It is found in the virion membrane. Functionally, the glycoprotein gp2 from the avirulent strain Kentucky A (KyA) is probably non functional since this strain harbors an in-frame deletion of 1,242 nucleotides in gene 71. The protein is Glycoprotein gp2 (US4) of Equus caballus (Horse).